Reading from the N-terminus, the 800-residue chain is Phenylalanine--tRNA ligase beta subunit (800 aa).

Residues 39-154 form the tRNA-binding domain; sequence TKDIKNLVVG…ESQVPGTDAL (116 aa). The B5 domain occupies 408 to 483; it reads AFITPIDITA…RIYGYDDIPS (76 aa). Residues Asp-461, Asp-467, Glu-470, and Glu-471 each coordinate Mg(2+). The 93-residue stretch at 708–800 folds into the FDX-ACB domain; that stretch reads PIFPGMSRDI…ALIEQGAVIR (93 aa).

This sequence belongs to the phenylalanyl-tRNA synthetase beta subunit family. Type 1 subfamily. As to quaternary structure, tetramer of two alpha and two beta subunits. Mg(2+) serves as cofactor.

The protein resides in the cytoplasm. It carries out the reaction tRNA(Phe) + L-phenylalanine + ATP = L-phenylalanyl-tRNA(Phe) + AMP + diphosphate + H(+). This is Phenylalanine--tRNA ligase beta subunit from Staphylococcus aureus (strain bovine RF122 / ET3-1).